A 370-amino-acid polypeptide reads, in one-letter code: Putative transposase InsL for insertion sequence element IS186A (370 aa).

Belongs to the transposase 11 family.

Involved in the transposition of the insertion sequence IS186. The sequence is that of Putative transposase InsL for insertion sequence element IS186A (insL1) from Escherichia coli (strain K12).